The following is a 479-amino-acid chain: Probable aspartic-type endopeptidase OPSB (479 aa).

The first 19 residues, 1-19 (MRGDSFIWSLTTAASLLYA), serve as a signal peptide directing secretion. Residues 58–393 (SGKTVSQDLD…DLDNNEISIA (336 aa)) enclose the Peptidase A1 domain. A glycan (N-linked (GlcNAc...) asparagine) is linked at N68. D76 is an active-site residue. N121 is a glycosylation site (N-linked (GlcNAc...) asparagine). D275 is a catalytic residue. N-linked (GlcNAc...) asparagine glycosylation is present at N398. The tract at residues 435-454 (LSGIETGVPGARPTSRGAAP) is disordered. A lipid anchor (GPI-anchor amidated glycine) is attached at G451. Positions 452-479 (AAPTMRPDVTFGVAAAGLAGAGILFAFM) are cleaved as a propeptide — removed in mature form.

It belongs to the peptidase A1 family.

It is found in the cell membrane. In terms of biological role, probable GPI-anchored aspartic-type endopeptidase which contributes to virulence. The polypeptide is Probable aspartic-type endopeptidase OPSB (OPSB) (Arthroderma otae (strain ATCC MYA-4605 / CBS 113480) (Microsporum canis)).